The following is a 602-amino-acid chain: Alpha-glucosides permease MPH3 (602 aa).

Residues 1–106 lie on the Cytoplasmic side of the membrane; sequence MKNLSFLINR…AAAWSLLVST (106 aa). A helical transmembrane segment spans residues 107–127; that stretch reads TLIMEGYDTAILGAFYALPIF. The Extracellular portion of the chain corresponds to 128–142; that stretch reads QRKFGSQNDKTGEWE. Residues 143–163 form a helical membrane-spanning segment; the sequence is ISASWQIGLTLCYMAGEIVGL. Residues 164–178 lie on the Cytoplasmic side of the membrane; sequence QLTGPSVDLVGNRYT. A helical membrane pass occupies residues 179–199; sequence LIIALFFLAAFTFILYFCNSL. Residue Gly200 is a topological domain, extracellular. The chain crosses the membrane as a helical span at residues 201 to 221; sequence MIAVGQALCGMPWGCFQCLTV. Residues 222–234 are Cytoplasmic-facing; that stretch reads SYASEICPLALRY. Residues 235-255 traverse the membrane as a helical segment; it reads YLTTYSNLCWLFGQLFAAGIM. Over 256 to 270 the chain is Extracellular; that stretch reads KNSQKKYADSELGYK. A helical membrane pass occupies residues 271–291; the sequence is LPFALQWILPVPLALGIFFAP. At 292–363 the chain is on the cytoplasmic side; the sequence is ESPWWLVKKG…EDKINRRRTR (72 aa). The chain crosses the membrane as a helical span at residues 364 to 384; sequence ITCLCWAGQATCGSILIGYST. At 385-397 the chain is on the extracellular side; sequence YFYEKAGVSTEMS. The helical transmembrane segment at 398–418 threads the bilayer; that stretch reads FTFSIIQYCLGICATFLSWWA. Topologically, residues 419 to 426 are cytoplasmic; the sequence is SKYFGRYD. A helical transmembrane segment spans residues 427 to 447; sequence LYAFGLAFQTIVFFIIGGLGC. Topologically, residues 448 to 459 are extracellular; it reads SSTHGSKMGSGS. The chain crosses the membrane as a helical span at residues 460–480; the sequence is LLMAVAFFYNLGIAPVVFCLV. Over 481–492 the chain is Cytoplasmic; it reads SEMPSSRLRTKT. The chain crosses the membrane as a helical span at residues 493–513; that stretch reads IILARNTYNVVSIICSVLILY. At 514–525 the chain is on the extracellular side; that stretch reads QLNSKKWNWGAK. A helical membrane pass occupies residues 526-546; the sequence is SGFFWGVLCFCTLIWAVVDLP. Residues 547–602 lie on the Cytoplasmic side of the membrane; the sequence is ETAGKTFVEINELFKLGVSARKFKSTKVDPFVVKTPPKDVSHNDPKGDIEASIAEE. Basic and acidic residues predominate over residues 582 to 595; sequence PPKDVSHNDPKGDI. The tract at residues 582–602 is disordered; that stretch reads PPKDVSHNDPKGDIEASIAEE.

It belongs to the major facilitator superfamily. Sugar transporter (TC 2.A.1.1) family.

It localises to the cell membrane. High-affinity uptake of maltose and maltotriose. Also transports alpha-methylglucoside, glucose and turanose but not melezitose or trehalose. The polypeptide is Alpha-glucosides permease MPH3 (MPH3) (Saccharomyces cerevisiae (strain ATCC 204508 / S288c) (Baker's yeast)).